Consider the following 251-residue polypeptide: 5-oxoprolinase subunit A 2 (251 aa).

Belongs to the LamB/PxpA family. Forms a complex composed of PxpA, PxpB and PxpC.

The enzyme catalyses 5-oxo-L-proline + ATP + 2 H2O = L-glutamate + ADP + phosphate + H(+). In terms of biological role, catalyzes the cleavage of 5-oxoproline to form L-glutamate coupled to the hydrolysis of ATP to ADP and inorganic phosphate. This Pseudomonas syringae pv. tomato (strain ATCC BAA-871 / DC3000) protein is 5-oxoprolinase subunit A 2.